A 550-amino-acid polypeptide reads, in one-letter code: Coiled-coil domain-containing protein 102A (550 aa).

2 disordered regions span residues 1-69 (MSHG…DGDW) and 138-247 (GARR…ATEE). Phosphoserine occurs at positions 12, 26, and 28. Positions 37–61 (SLPPTPPSGTPSPGPPPALPLPPAP) are enriched in pro residues. The stretch at 72–161 (REELRLRELE…ARGRELARLR (90 aa)) forms a coiled coil. Composition is skewed to basic and acidic residues over residues 138 to 159 (GARR…ELAR) and 169 to 188 (QTRD…DVGS). Coiled-coil stretches lie at residues 263–396 (QKVL…RRQT) and 427–518 (KLKK…NAPL). 2 disordered regions span residues 472-497 (DELD…QSEN) and 509-550 (LRRQ…IQVA). Over residues 530 to 550 (EEAEDGTSDLDEDEDLQIQVA) the composition is skewed to acidic residues. Ser-537 carries the post-translational modification Phosphoserine.

The chain is Coiled-coil domain-containing protein 102A (CCDC102A) from Homo sapiens (Human).